The primary structure comprises 273 residues: Peptidoglycan-N-acetylglucosamine deacetylase BC_1974 (273 aa).

Residues Ile10–Ile30 form a helical membrane-spanning segment. The NodB homology domain maps to Lys69–Glu255. Asp76 serves as the catalytic Proton acceptor. The Zn(2+) site is built by Asp77, His126, and His130. His230 functions as the Proton donor in the catalytic mechanism.

Belongs to the polysaccharide deacetylase family. Zn(2+) serves as cofactor. The cofactor is Co(2+). Ni(2+) is required as a cofactor.

The protein resides in the cell membrane. It catalyses the reaction peptidoglycan-N-acetyl-D-glucosamine + H2O = peptidoglycan-D-glucosamine + acetate.. With respect to regulation, inhibited by the hydroxamate N-hydroxy-4-(naphthalene-1-yl)benzamide (NHNB). Its function is as follows. Catalyzes the deacetylation of N-acetylglucosamine (GlcNAc) residues in peptidoglycan. The protein is Peptidoglycan-N-acetylglucosamine deacetylase BC_1974 of Bacillus cereus (strain ATCC 14579 / DSM 31 / CCUG 7414 / JCM 2152 / NBRC 15305 / NCIMB 9373 / NCTC 2599 / NRRL B-3711).